We begin with the raw amino-acid sequence, 344 residues long: Small ribosomal subunit protein uS3 (344 aa).

One can recognise a KH type-2 domain in the interval 38-106; sequence LKAALRERLK…EVFIDIQEVH (69 aa). The tract at residues 217–344 is disordered; sequence PEPEPRREQR…QKPEGSGENQ (128 aa). Composition is skewed to basic and acidic residues over residues 219–259 and 335–344; these read PEPR…RGDR and QKPEGSGENQ.

It belongs to the universal ribosomal protein uS3 family. Part of the 30S ribosomal subunit. Forms a tight complex with proteins S10 and S14.

In terms of biological role, binds the lower part of the 30S subunit head. Binds mRNA in the 70S ribosome, positioning it for translation. In Solibacter usitatus (strain Ellin6076), this protein is Small ribosomal subunit protein uS3.